We begin with the raw amino-acid sequence, 843 residues long: Protein P (843 aa).

A terminal protein domain (TP) region spans residues 1–177 (MPLSYQHFRK…FCGSPYSWEQ (177 aa)). The segment at 178-346 (DLQHGRLVFQ…YCLSHIVNLI (169 aa)) is spacer. Positions 219 to 269 (RKSRLGPQPAQGQLAGRQQGGSGSIRARVHPSPWGTVGVEPSGSGPTHNCA) are disordered. Positions 223 to 235 (LGPQPAQGQLAGR) are enriched in low complexity. Residues 347–690 (EDWGPCTEHG…YLNLYPVARQ (344 aa)) form a polymerase/reverse transcriptase domain (RT) region. One can recognise a Reverse transcriptase domain in the interval 357–600 (EHRIRTPRTP…YSLNFMGYVI (244 aa)). The Mg(2+) site is built by D429, D551, and D552.

The protein belongs to the hepadnaviridae P protein family.

The enzyme catalyses DNA(n) + a 2'-deoxyribonucleoside 5'-triphosphate = DNA(n+1) + diphosphate. It carries out the reaction Endonucleolytic cleavage to 5'-phosphomonoester.. Its activity is regulated as follows. Activated by host HSP70 and HSP40 in vitro to be able to bind the epsilon loop of the pgRNA. Because deletion of the RNase H region renders the protein partly chaperone-independent, the chaperones may be needed indirectly to relieve occlusion of the RNA-binding site by this domain. Inhibited by several reverse-transcriptase inhibitors: Lamivudine, Adefovir and Entecavir. Its function is as follows. Multifunctional enzyme that converts the viral RNA genome into dsDNA in viral cytoplasmic capsids. This enzyme displays a DNA polymerase activity that can copy either DNA or RNA templates, and a ribonuclease H (RNase H) activity that cleaves the RNA strand of RNA-DNA heteroduplexes in a partially processive 3'- to 5'-endonucleasic mode. Neo-synthesized pregenomic RNA (pgRNA) are encapsidated together with the P protein, and reverse-transcribed inside the nucleocapsid. Initiation of reverse-transcription occurs first by binding the epsilon loop on the pgRNA genome, and is initiated by protein priming, thereby the 5'-end of (-)DNA is covalently linked to P protein. Partial (+)DNA is synthesized from the (-)DNA template and generates the relaxed circular DNA (RC-DNA) genome. After budding and infection, the RC-DNA migrates in the nucleus, and is converted into a plasmid-like covalently closed circular DNA (cccDNA). The activity of P protein does not seem to be necessary for cccDNA generation, and is presumably released from (+)DNA by host nuclear DNA repair machinery. This is Protein P from Hepatitis B virus genotype B2 subtype adw (isolate China/patient4/1996) (HBV-B).